The primary structure comprises 156 residues: Arginine repressor (156 aa).

The protein belongs to the ArgR family.

It is found in the cytoplasm. Its pathway is amino-acid biosynthesis; L-arginine biosynthesis [regulation]. Its function is as follows. Regulates arginine biosynthesis genes. The chain is Arginine repressor from Klebsiella pneumoniae (strain 342).